Consider the following 102-residue polypeptide: Large ribosomal subunit protein bL21 (102 aa).

The protein belongs to the bacterial ribosomal protein bL21 family. Part of the 50S ribosomal subunit. Contacts protein L20.

In terms of biological role, this protein binds to 23S rRNA in the presence of protein L20. The sequence is that of Large ribosomal subunit protein bL21 from Arthrobacter sp. (strain FB24).